An 89-amino-acid polypeptide reads, in one-letter code: Elongation factor 1-beta (89 aa).

Belongs to the EF-1-beta/EF-1-delta family.

In terms of biological role, promotes the exchange of GDP for GTP in EF-1-alpha/GDP, thus allowing the regeneration of EF-1-alpha/GTP that could then be used to form the ternary complex EF-1-alpha/GTP/AAtRNA. This is Elongation factor 1-beta from Methanosarcina acetivorans (strain ATCC 35395 / DSM 2834 / JCM 12185 / C2A).